The primary structure comprises 178 residues: NADH-quinone oxidoreductase subunit I (178 aa).

4Fe-4S ferredoxin-type domains lie at 45 to 74 (RHPD…VEAA) and 90 to 119 (KVYE…LGNE). The [4Fe-4S] cluster site is built by cysteine 54, cysteine 57, cysteine 60, cysteine 64, cysteine 99, cysteine 102, cysteine 105, and cysteine 109.

Belongs to the complex I 23 kDa subunit family. As to quaternary structure, NDH-1 is composed of 15 different subunits. Subunits NuoA, H, J, K, L, M, N constitute the membrane sector of the complex. Requires [4Fe-4S] cluster as cofactor.

The protein localises to the cell membrane. The catalysed reaction is a quinone + NADH + 5 H(+)(in) = a quinol + NAD(+) + 4 H(+)(out). Its function is as follows. NDH-1 shuttles electrons from NADH, via FMN and iron-sulfur (Fe-S) centers, to quinones in the respiratory chain. The immediate electron acceptor for the enzyme in this species is believed to be ubiquinone. Couples the redox reaction to proton translocation (for every two electrons transferred, four hydrogen ions are translocated across the cytoplasmic membrane), and thus conserves the redox energy in a proton gradient. This is NADH-quinone oxidoreductase subunit I from Deinococcus radiodurans (strain ATCC 13939 / DSM 20539 / JCM 16871 / CCUG 27074 / LMG 4051 / NBRC 15346 / NCIMB 9279 / VKM B-1422 / R1).